We begin with the raw amino-acid sequence, 607 residues long: Arginine--tRNA ligase (607 aa).

Positions 147–157 match the 'HIGH' region motif; sequence PNIAKEMHVGH.

The protein belongs to the class-I aminoacyl-tRNA synthetase family. Monomer.

The protein resides in the cytoplasm. The catalysed reaction is tRNA(Arg) + L-arginine + ATP = L-arginyl-tRNA(Arg) + AMP + diphosphate. The chain is Arginine--tRNA ligase from Prochlorococcus marinus (strain NATL2A).